We begin with the raw amino-acid sequence, 261 residues long: Zinc finger protein 664 (261 aa).

9 consecutive C2H2-type zinc fingers follow at residues 3 to 25, 31 to 53, 59 to 81, 87 to 109, 115 to 137, 143 to 165, 171 to 193, 199 to 221, and 227 to 249; these read YKCP…QKIH, HKCD…WRDH, YKCD…KKIH, YKCY…MRVH, YVCS…QRVH, FKCE…QRVH, YKCY…QRVH, YRCC…QRVH, and FKCD…QRVH. A Glycyl lysine isopeptide (Lys-Gly) (interchain with G-Cter in SUMO2) cross-link involves residue K257.

The protein belongs to the krueppel C2H2-type zinc-finger protein family.

Its subcellular location is the nucleus. Functionally, may be involved in transcriptional regulation. The chain is Zinc finger protein 664 (ZNF664) from Pongo abelii (Sumatran orangutan).